A 62-amino-acid chain; its full sequence is Ribulose bisphosphate carboxylase/oxygenase activase, chloroplastic (62 aa).

Belongs to the RuBisCO activase family.

It is found in the plastid. The protein resides in the chloroplast stroma. Activation of RuBisCO (ribulose-1,5-bisphosphate carboxylase/oxygenase; EC 4.1.1.39) involves the ATP-dependent carboxylation of the epsilon-amino group of lysine leading to a carbamate structure. The sequence is that of Ribulose bisphosphate carboxylase/oxygenase activase, chloroplastic from Vitis sp. (Grape).